The chain runs to 127 residues: Mitochondrial pyruvate carrier 2 (127 aa).

The Mitochondrial matrix portion of the chain corresponds to 2-40 (SAAGARGLRATYHRLLDKVELMLPEKLRPLYNHPAGPRT). The helical transmembrane segment at 41-61 (VFFWAPIMKWGLVCAGLADMA) threads the bilayer. The Mitochondrial intermembrane portion of the chain corresponds to 62-72 (RPAEKLSTAQS). Residues 73-90 (AVLMATGFIWSRYSLVII) traverse the membrane as a helical segment. At 91–95 (PKNWS) the chain is on the mitochondrial matrix side. A helical transmembrane segment spans residues 96–115 (LFAVNFFVGAAGASQLFRIW). At 116 to 127 (RYNQELKAKAHK) the chain is on the mitochondrial intermembrane side.

It belongs to the mitochondrial pyruvate carrier (MPC) (TC 2.A.105) family. Homodimer. Homooligomer. Forms heterodimers with MPC1 and MPC1L. The heterodimer is the more stable and dominant form.

The protein localises to the mitochondrion inner membrane. It catalyses the reaction pyruvate(out) + H(+)(out) = pyruvate(in) + H(+)(in). In terms of biological role, mediates the uptake of pyruvate into mitochondria. The polypeptide is Mitochondrial pyruvate carrier 2 (MPC2) (Homo sapiens (Human)).